We begin with the raw amino-acid sequence, 102 residues long: Late embryogenesis abundant protein D-19 (102 aa).

A disordered region spans residues 1–102 (MASEQYQAMR…IDESKFRTKN (102 aa)). A compositionally biased stretch (basic and acidic residues) spans 48-58 (EGRHKGGETRK).

Belongs to the small hydrophilic plant seed protein family.

Its function is as follows. LEA proteins are late embryonic proteins abundant in higher plant seed embryos. There are two subsets of LEA proteins (5a and 5b), the first ones are expressed when the cotyledon weight reach 80 mg and the second set are expressed above 100 mg. The function of those proteins is not known. The polypeptide is Late embryogenesis abundant protein D-19 (Gossypium hirsutum (Upland cotton)).